We begin with the raw amino-acid sequence, 188 residues long: Putative ankyrin repeat protein FPV230 (188 aa).

ANK repeat units follow at residues 2–31, 36–65, 135–164, and 168–187; these read ENELKLYYAVSSQNENLVIQLLNKGYNPNA, KYMIPLHKAVECRNVDITKHLLSNGADANV, LGSTPLHIASKYNNKTMVKFFLERGADINI, and NNNTPLIYAVCSVIRLYLKC.

In Vertebrata (FPV), this protein is Putative ankyrin repeat protein FPV230.